The chain runs to 366 residues: Histidinol-phosphate aminotransferase (366 aa).

Position 226 is an N6-(pyridoxal phosphate)lysine (Lys-226).

This sequence belongs to the class-II pyridoxal-phosphate-dependent aminotransferase family. Histidinol-phosphate aminotransferase subfamily. The cofactor is pyridoxal 5'-phosphate.

The catalysed reaction is L-histidinol phosphate + 2-oxoglutarate = 3-(imidazol-4-yl)-2-oxopropyl phosphate + L-glutamate. Its pathway is amino-acid biosynthesis; L-histidine biosynthesis; L-histidine from 5-phospho-alpha-D-ribose 1-diphosphate: step 7/9. In Methanosarcina barkeri (strain Fusaro / DSM 804), this protein is Histidinol-phosphate aminotransferase.